A 156-amino-acid chain; its full sequence is Small ribosomal subunit protein uS7 (156 aa).

The protein belongs to the universal ribosomal protein uS7 family. In terms of assembly, part of the 30S ribosomal subunit. Contacts proteins S9 and S11.

One of the primary rRNA binding proteins, it binds directly to 16S rRNA where it nucleates assembly of the head domain of the 30S subunit. Is located at the subunit interface close to the decoding center, probably blocks exit of the E-site tRNA. The protein is Small ribosomal subunit protein uS7 of Lawsonia intracellularis (strain PHE/MN1-00).